A 340-amino-acid chain; its full sequence is Proline-rich transmembrane protein 2 (340 aa).

The disordered stretch occupies residues 1 to 261 (MAASSSEISE…AGPGVEGGEG (261 aa)). Residues 1–268 (MAASSSEISE…GEGTQKPRDY (268 aa)) lie on the Cytoplasmic side of the membrane. The segment covering 9–18 (SEMKGVEESP) has biased composition (basic and acidic residues). Residue Ser28 is modified to Phosphoserine. Position 74 is a phosphothreonine (Thr74). 2 stretches are compositionally biased toward pro residues: residues 131 to 155 (PPEPAPEPAPQPDPRPDSQPTPKPA) and 197 to 207 (APEPHSPPSKK). The residue at position 238 (Ser238) is a Phosphoserine. Position 240 is an omega-N-methylarginine (Arg240). A phosphoserine mark is found at Ser248 and Ser249. The segment at residues 269 to 289 (IILAILSCFCPMWPVNIVAFA) is an intramembrane region (helical). The Cytoplasmic segment spans residues 290 to 317 (YAVMSRNSLQQGDVDGAQRLGRVAKLLS). Residues 318 to 338 (IVALVGGVLIIIASCVINLGV) form a helical membrane-spanning segment. Topologically, residues 339–340 (YK) are extracellular.

The protein belongs to the CD225/Dispanin family. As to quaternary structure, component of the outer core of AMPAR complex. AMPAR complex consists of an inner core made of 4 pore-forming GluA/GRIA proteins (GRIA1, GRIA2, GRIA3 and GRIA4) and 4 major auxiliary subunits arranged in a twofold symmetry. One of the two pairs of distinct binding sites is occupied either by CNIH2, CNIH3 or CACNG2, CACNG3. The other harbors CACNG2, CACNG3, CACNG4, CACNG8 or GSG1L. This inner core of AMPAR complex is complemented by outer core constituents binding directly to the GluA/GRIA proteins at sites distinct from the interaction sites of the inner core constituents. Outer core constituents include at least PRRT1, PRRT2, CKAMP44/SHISA9, FRRS1L and NRN1. The proteins of the inner and outer core serve as a platform for other, more peripherally associated AMPAR constituents. Alone or in combination, these auxiliary subunits control the gating and pharmacology of the AMPAR complex and profoundly impact their biogenesis and protein processing. Interacts with intersectin 1/ITSN1. Interacts with SNARE complex components, including SNAP25, STX1A, SYT1 and SYT2; this interaction may inhibit SNARE complex formation.

The protein localises to the cell membrane. It is found in the presynaptic cell membrane. The protein resides in the synapse. It localises to the cell projection. Its subcellular location is the axon. The protein localises to the cytoplasmic vesicle. It is found in the secretory vesicle. The protein resides in the synaptic vesicle membrane. It localises to the postsynaptic density membrane. Its subcellular location is the dendritic spine. As a component of the outer core of AMPAR complex, may be involved in synaptic transmission in the central nervous system. In hippocampal neurons, in presynaptic terminals, plays an important role in the final steps of neurotransmitter release, possibly by regulating Ca(2+)-sensing. In the cerebellum, may inhibit SNARE complex formation and down-regulate short-term facilitation. The sequence is that of Proline-rich transmembrane protein 2 (PRRT2) from Homo sapiens (Human).